The following is a 288-amino-acid chain: MIQIYTAKDIQNLTKNYRKEGKTIGFVPTMGFLHEGHMSLVEKARKDNDIVVMSIFVNPMQFGPGEDYEAYPRDIERDRQLAAGSGVDVLFTPEPEEMYGQEPTVTASVKKRTDVLCGRSREGHFDGVATVLTKLFNLTSPTRVYFGMKDAQQVAVVDGLINDFFMDIELIPVETKREEDGLAKSSRNVNLRAEERQEATALYRALQRGAELIRNGERDPEAVKREIRSILEKTSGVIDYADIYSYPDLEIRDPLTGKVIIAVAVQFSKARLIDNIIVDIPADQKEDL.

30-37 (MGFLHEGH) provides a ligand contact to ATP. His37 (proton donor) is an active-site residue. Gln61 serves as a coordination point for (R)-pantoate. Gln61 provides a ligand contact to beta-alanine. 147–150 (GMKD) is an ATP binding site. Residue Gln153 coordinates (R)-pantoate. ATP is bound at residue 184 to 187 (KSSR).

This sequence belongs to the pantothenate synthetase family. Homodimer.

The protein resides in the cytoplasm. The catalysed reaction is (R)-pantoate + beta-alanine + ATP = (R)-pantothenate + AMP + diphosphate + H(+). The protein operates within cofactor biosynthesis; (R)-pantothenate biosynthesis; (R)-pantothenate from (R)-pantoate and beta-alanine: step 1/1. Catalyzes the condensation of pantoate with beta-alanine in an ATP-dependent reaction via a pantoyl-adenylate intermediate. This Bacillus licheniformis (strain ATCC 14580 / DSM 13 / JCM 2505 / CCUG 7422 / NBRC 12200 / NCIMB 9375 / NCTC 10341 / NRRL NRS-1264 / Gibson 46) protein is Pantothenate synthetase.